The primary structure comprises 441 residues: Serine carboxypeptidase-like 2 (441 aa).

The first 29 residues, 1 to 29 (MANKYFSSVLKSLLLLLHLVFLSKQHVDS), serve as a signal peptide directing secretion. Intrachain disulfides connect Cys88–Cys331, Cys252–Cys266, and Cys290–Cys297. Asn109 carries an N-linked (GlcNAc...) asparagine glycan. Ser184 is an active-site residue. Residue Asn350 is glycosylated (N-linked (GlcNAc...) asparagine). Asp366 is an active-site residue. Asn382 carries N-linked (GlcNAc...) asparagine glycosylation. His419 is a catalytic residue.

It belongs to the peptidase S10 family. In terms of tissue distribution, expressed in seedlings and roots.

The protein localises to the secreted. In terms of biological role, probable carboxypeptidase. This chain is Serine carboxypeptidase-like 2 (SCPL2), found in Arabidopsis thaliana (Mouse-ear cress).